Here is a 393-residue protein sequence, read N- to C-terminus: UPF0496 protein At2g18630 (393 aa).

The interval 1 to 20 (MMGGKSSKSKKNVEFGSPST) is disordered. Positions 149-222 (VNQFEEENED…RLRNIKTWRR (74 aa)) form a coiled coil. 2 consecutive transmembrane segments (helical) span residues 226–246 (MVFV…AAVA) and 249–269 (PVVA…GKWC). Residues 299-356 (KEMDNISILVRKVEVEIESLLKKAEFAITEEKEVRLAIDEIKKKLDVFTETIEELGEH) adopt a coiled-coil conformation.

This sequence belongs to the UPF0496 family.

It is found in the membrane. The chain is UPF0496 protein At2g18630 from Arabidopsis thaliana (Mouse-ear cress).